The sequence spans 338 residues: 1-aminocyclopropane-1-carboxylate deaminase (338 aa).

K51 bears the N6-(pyridoxal phosphate)lysine mark. The active-site Nucleophile is S78.

The protein belongs to the ACC deaminase/D-cysteine desulfhydrase family. Pyridoxal 5'-phosphate is required as a cofactor.

The catalysed reaction is 1-aminocyclopropane-1-carboxylate + H2O = 2-oxobutanoate + NH4(+). Catalyzes a cyclopropane ring-opening reaction, the irreversible conversion of 1-aminocyclopropane-1-carboxylate (ACC) to ammonia and alpha-ketobutyrate. Allows growth on ACC as a nitrogen source. This is 1-aminocyclopropane-1-carboxylate deaminase from Enterobacter cloacae.